Consider the following 485-residue polypeptide: MKFIVKLFPEIMMKSKPVRMRFTKMLETNIRNVLRKVDEEARVQRQWDKIMVRVPEDKPEMIERYAERLACIPGIAHVLQVRESTFESVDDIYQQTLALYKEELAGKTFCVRVKRSGKHEFNSIEVERYVGGGLNQFTEAAGVRLKNPDMTVNLEIDNEHLYLVEKRIDGLGGFPMATQEDVLSLISGGFDSGVSSFQFIKRGSRTHYCFFNLGGDQHEIGVKQVAYHLWQKYGESHKVKFISVPFDPVVQEILEKIDNGQMGVILKRMMMRAASRIAEKMGIQALVTGEAMGQVSSQTLTNLNVIDRSTDMLILRPLIVMDKQDIINMSREIGTEDFAKSIPEYCGVISQKPTVKAVMGKILAEEEKFSEDLIDRVVEAAEVIDIRDIAVSMDTKITETETVDAVSGGEVVVDIRSPEEEEQSPLSLNGIEVKCIPFFKLATQFADLDKEKTYLLYCDRGVMSKLQALYLQEQGYHNVKVYRPA.

Residues 63-167 (ERYAERLACI…NEHLYLVEKR (105 aa)) enclose the THUMP domain. Residues 185 to 186 (LI), lysine 267, glycine 289, and glutamine 298 each bind ATP. Cysteine 346 and cysteine 458 are oxidised to a cystine. The Rhodanese domain maps to 406-484 (VSGGEVVVDI…GYHNVKVYRP (79 aa)). Cysteine 458 acts as the Cysteine persulfide intermediate in catalysis.

This sequence belongs to the ThiI family.

It is found in the cytoplasm. It carries out the reaction [ThiI sulfur-carrier protein]-S-sulfanyl-L-cysteine + a uridine in tRNA + 2 reduced [2Fe-2S]-[ferredoxin] + ATP + H(+) = [ThiI sulfur-carrier protein]-L-cysteine + a 4-thiouridine in tRNA + 2 oxidized [2Fe-2S]-[ferredoxin] + AMP + diphosphate. The catalysed reaction is [ThiS sulfur-carrier protein]-C-terminal Gly-Gly-AMP + S-sulfanyl-L-cysteinyl-[cysteine desulfurase] + AH2 = [ThiS sulfur-carrier protein]-C-terminal-Gly-aminoethanethioate + L-cysteinyl-[cysteine desulfurase] + A + AMP + 2 H(+). Its pathway is cofactor biosynthesis; thiamine diphosphate biosynthesis. Functionally, catalyzes the ATP-dependent transfer of a sulfur to tRNA to produce 4-thiouridine in position 8 of tRNAs, which functions as a near-UV photosensor. Also catalyzes the transfer of sulfur to the sulfur carrier protein ThiS, forming ThiS-thiocarboxylate. This is a step in the synthesis of thiazole, in the thiamine biosynthesis pathway. The sulfur is donated as persulfide by IscS. The sequence is that of tRNA sulfurtransferase from Shewanella loihica (strain ATCC BAA-1088 / PV-4).